The following is a 358-amino-acid chain: CX3C chemokine receptor 1 (358 aa).

Residues 1–26 (MHTTLPESTSENFEYYDLAEACDMGD) are Extracellular-facing. Residues 27-47 (IVALGTVFVVILYSLVFAFGL) traverse the membrane as a helical segment. The Cytoplasmic segment spans residues 48 to 68 (VGNLLVVFALINSQRSKSITD). Residues 69-89 (IYLLNLALSDLLFVATLPFWT) form a helical membrane-spanning segment. At 90 to 105 (HYVINEQGLHHATCKL) the chain is on the extracellular side. Cysteines 103 and 176 form a disulfide. The helical transmembrane segment at 106-126 (ITAFFFIGFFGGIFFITVISV) threads the bilayer. Topologically, residues 127–147 (DRFLAIVLAANSMSNRTVQHG) are cytoplasmic. A helical membrane pass occupies residues 148-168 (VTTSLGVWAAAILVATPQFMF). Over 169–186 (TREKENECFGDYPEILQE) the chain is Extracellular. A helical membrane pass occupies residues 187–207 (IWPVILNTEINFLGFLLPLLI). Topologically, residues 208–232 (MSYCYFRIMQTLFSCKNHKKAKAIR) are cytoplasmic. A helical transmembrane segment spans residues 233–253 (LIFLVVVVFFLFWTPYNVMIF). The Extracellular segment spans residues 254–275 (LQTLNLYDFFPKCDVKRDLKLA). Residues 276-296 (ISVTETIAFSHCCLNPLIYAF) traverse the membrane as a helical segment. Residues 297 to 358 (AGEKFRRYLY…TSDGDASILL (62 aa)) are Cytoplasmic-facing. Residue T349 is modified to Phosphothreonine.

It belongs to the G-protein coupled receptor 1 family. In terms of assembly, found in a ternary complex with CX3CL1 and ITGAV:ITGB3 or ITGA4:ITGB1. Post-translationally, this protein is not N-glycosylated which is unusual for G-protein-coupled receptors.

The protein localises to the cell membrane. In terms of biological role, receptor for the C-X3-C chemokine fractalkine (CX3CL1) present on many early leukocyte cells; CX3CR1-CX3CL1 signaling exerts distinct functions in different tissue compartments, such as immune response, inflammation, cell adhesion and chemotaxis. CX3CR1-CX3CL1 signaling mediates cell migratory functions. Responsible for the recruitment of natural killer (NK) cells to inflamed tissues. Acts as a regulator of inflammation process leading to atherogenesis by mediating macrophage and monocyte recruitment to inflamed atherosclerotic plaques, promoting cell survival. Involved in airway inflammation by promoting interleukin 2-producing T helper (Th2) cell survival in inflamed lung. Involved in the migration of circulating monocytes to non-inflamed tissues, where they differentiate into macrophages and dendritic cells. Acts as a negative regulator of angiogenesis, probably by promoting macrophage chemotaxis. Plays a key role in brain microglia by regulating inflammatory response in the central nervous system (CNS) and regulating synapse maturation. Required to restrain the microglial inflammatory response in the CNS and the resulting parenchymal damage in response to pathological stimuli. Involved in brain development by participating in synaptic pruning, a natural process during which brain microglia eliminates extra synapses during postnatal development. Synaptic pruning by microglia is required to promote the maturation of circuit connectivity during brain development. Acts as an important regulator of the gut microbiota by controlling immunity to intestinal bacteria and fungi. Expressed in lamina propria dendritic cells in the small intestine, which form transepithelial dendrites capable of taking up bacteria in order to provide defense against pathogenic bacteria. Required to initiate innate and adaptive immune responses against dissemination of commensal fungi (mycobiota) component of the gut: expressed in mononuclear phagocytes (MNPs) and acts by promoting induction of antifungal IgG antibodies response to confer protection against disseminated C.albicans or C.auris infection. Also acts as a receptor for C-C motif chemokine CCL26, inducing cell chemotaxis. The polypeptide is CX3C chemokine receptor 1 (Bos taurus (Bovine)).